The chain runs to 805 residues: Cation channel sperm-associated auxiliary subunit delta (805 aa).

Residues 1–16 (MLVLMLAAAVATMVRA) form the signal peptide. At 17–723 (HTLCRVHTVR…ALPVTKFQPL (707 aa)) the chain is on the extracellular side. Cystine bridges form between C20/C366, C56/C143, C142/C149, C384/C493, C507/C701, C522/C569, and C621/C651. 5 N-linked (GlcNAc...) asparagine glycosylation sites follow: N227, N419, N469, N535, and N627. Residues 724–745 (LTILLMVTTTLLTAWLAYAIPK) traverse the membrane as a helical segment. The Cytoplasmic segment spans residues 746-805 (QLRSEKGQRLLGFCYQILQLCLGVCFCTWLRGKLRQWLRPRRVKDQNRGKVRVAQKHPET).

Belongs to the CATSPERD family. Component of the CatSper complex or CatSpermasome composed of the core pore-forming members CATSPER1, CATSPER2, CATSPER3 and CATSPER4 as well as auxiliary members CATSPERB, CATSPERG2, CATSPERD, CATSPERE, CATSPERZ, C2CD6/CATSPERT, SLCO6C1, TMEM249, TMEM262 and EFCAB9. HSPA1 may be an additional auxiliary complex member. The core complex members CATSPER1, CATSPER2, CATSPER3 and CATSPER4 form a heterotetrameric channel. The auxiliary CATSPERB, CATSPERG2, CATSPERD and CATSPERE subunits form a pavilion-like structure over the pore which stabilizes the complex through interactions with CATSPER4, CATSPER3, CATSPER1 and CATSPER2 respectively. SLCO6C1 interacts with CATSPERE and TMEM262/CATSPERH interacts with CATSPERB, further stabilizing the complex. C2CD6/CATSPERT interacts at least with CATSPERD and is required for targeting the CatSper complex in the flagellar membrane. Testis-specific.

It is found in the cell projection. The protein resides in the cilium. Its subcellular location is the flagellum membrane. Its function is as follows. Auxiliary component of the CatSper complex, a complex involved in sperm cell hyperactivation. Sperm cell hyperactivation is needed for sperm motility which is essential late in the preparation of sperm for fertilization. Required for CATSPER1 stability before intraflagellar transport and/or incorporation of the CatSper complex channel into the flagellar membrane. This Mus musculus (Mouse) protein is Cation channel sperm-associated auxiliary subunit delta.